Reading from the N-terminus, the 546-residue chain is Casein kinase I homolog 2 (546 aa).

2 stretches are compositionally biased toward polar residues: residues 1–33 and 44–55; these read MSQV…SNVR and HVSSNLNHNTGN. The disordered stretch occupies residues 1 to 67; it reads MSQVQSPLTA…ASYSGSQSRD (67 aa). At Ser2 the chain carries N-acetylserine. In terms of domain architecture, Protein kinase spans 76-360; the sequence is YKIGKKIGEG…ETADGQYDWM (285 aa). Residues 82–90 and Lys105 each bind ATP; that span reads IGEGSFGVL. The active-site Proton acceptor is Asp195. 2 disordered regions span residues 373–425 and 443–546; these read NKKP…QAQA and QQAN…LGCC. The span at 412–425 shows a compositional bias: low complexity; sequence QQQQQQQAQAQAQA. A compositionally biased stretch (basic and acidic residues) spans 453–465; that stretch reads DDSHYDEEREASK. Ser455 is subject to Phosphoserine. A Glycyl lysine isopeptide (Lys-Gly) (interchain with G-Cter in ubiquitin) cross-link involves residue Lys465. Positions 475–496 are enriched in low complexity; sequence QQQTQQKYAQQQQKQMQQKSKQ. A compositionally biased stretch (polar residues) spans 497-530; sequence FANTGANGQTNKYPYNAQPTANDEQNAKNAAQDR. A compositionally biased stretch (low complexity) spans 533–546; sequence NKSSKGFFSKLGCC. 2 S-palmitoyl cysteine lipidation sites follow: Cys545 and Cys546.

It belongs to the protein kinase superfamily. CK1 Ser/Thr protein kinase family. Casein kinase I subfamily. Post-translationally, palmitoylated by AKR1, which is required for proper plasma membrane localization of YCK2.

The protein resides in the cell membrane. It carries out the reaction L-seryl-[protein] + ATP = O-phospho-L-seryl-[protein] + ADP + H(+). It catalyses the reaction L-threonyl-[protein] + ATP = O-phospho-L-threonyl-[protein] + ADP + H(+). In terms of biological role, casein kinases are operationally defined by their preferential utilization of acidic proteins such as caseins as substrates. The protein is Casein kinase I homolog 2 (YCK2) of Saccharomyces cerevisiae (strain ATCC 204508 / S288c) (Baker's yeast).